We begin with the raw amino-acid sequence, 139 residues long: Large ribosomal subunit protein bL9m (139 aa).

Positions 83–121 (DHQQLSKRHETEVQKNMELRKESVFGHKKEEKPKEEKKG) are disordered.

This sequence belongs to the bacterial ribosomal protein bL9 family. Component of the mitochondrial large ribosomal subunit (mt-LSU). Mature yeast 74S mitochondrial ribosomes consist of a small (37S) and a large (54S) subunit. The 37S small subunit contains a 15S ribosomal RNA (15S mt-rRNA) and 34 different proteins. The 54S large subunit contains a 21S rRNA (21S mt-rRNA) and 46 different proteins.

Its subcellular location is the mitochondrion. In terms of biological role, component of the mitochondrial ribosome (mitoribosome), a dedicated translation machinery responsible for the synthesis of mitochondrial genome-encoded proteins, including at least some of the essential transmembrane subunits of the mitochondrial respiratory chain. The mitoribosomes are attached to the mitochondrial inner membrane and translation products are cotranslationally integrated into the membrane. This is Large ribosomal subunit protein bL9m (MRPL50) from Saccharomyces cerevisiae (strain ATCC 204508 / S288c) (Baker's yeast).